Here is a 560-residue protein sequence, read N- to C-terminus: Choline/ethanolamine transporter FLVCR1 (560 aa).

The segment at 1–22 (MVKLNDEEGAAMAPGHQPTNGY) is disordered. Residues 1–99 (MVKLNDEEGA…TPGTEGSPAP (99 aa)) are Cytoplasmic-facing. Serine 56 carries the post-translational modification Phosphoserine. A disordered region spans residues 68–99 (QTPLAPEEETQTRLLPTGPGEETPGTEGSPAP). Residues 83–95 (PTGPGEETPGTEG) are compositionally biased toward low complexity. A helical transmembrane segment spans residues 100–124 (QTALSARRFVVLLIFSLYSLVNAFQ). Residues 125–142 (WIQYSVISNVFEGFYGVS) lie on the Extracellular side of the membrane. The chain crosses the membrane as a helical span at residues 143-170 (SLHIDWLSMVYMLAYVPLIFPATWLLDT). Residues 171-172 (RG) lie on the Cytoplasmic side of the membrane. A helical membrane pass occupies residues 173–192 (LRLTALLGSGLNCLGAWVKC). Residues 193-199 (ASVQQHL) lie on the Extracellular side of the membrane. Residues 200–228 (FWVTMLGQCLCSVAQVFILGLPSRIASVW) traverse the membrane as a helical segment. Ethanolamine is bound at residue glutamine 214. Topologically, residues 229-233 (FGPKE) are cytoplasmic. Residues 234-259 (VSTACATAVLGNQLGAAIGFLLPPVL) traverse the membrane as a helical segment. At 260–265 (VPNTQN) the chain is on the extracellular side. An N-linked (GlcNAc...) asparagine glycan is attached at asparagine 265. Residues 266 to 295 (NTDLLACNISTMFYGTSSVATFLCFLTIIA) form a helical membrane-spanning segment. At 296-331 (FKEKPQYPPSQAQAALQNSPPAKYSYKKSIRNLFRN) the chain is on the cytoplasmic side. The helical transmembrane segment at 332-362 (VPFVLLLITYGIITGAFYSVSTLLNQMILTY) threads the bilayer. The Extracellular portion of the chain corresponds to 363–366 (YKGE). The helical transmembrane segment at 367-395 (EVSAGKIGLTLVVAGMVGSILCGFWLDYT) threads the bilayer. Topologically, residues 396 to 397 (KI) are cytoplasmic. A helical membrane pass occupies residues 398 to 420 (YKQTTLIVYILSFLGMVIFTFTL). At 421–423 (DLG) the chain is on the extracellular side. A helical membrane pass occupies residues 424–453 (YGIVVFVTGGVLGFFMTGYLPLGFEFAVEI). The Cytoplasmic segment spans residues 454-461 (TYPESEGT). A helical transmembrane segment spans residues 462–487 (SSGLLNAAAQIFGILFTLAQGKLTTD). Residue glutamine 471 coordinates ethanolamine. A choline-binding site is contributed by glutamine 471. Residues 488-489 (YS) lie on the Extracellular side of the membrane. The chain crosses the membrane as a helical span at residues 490-512 (PKAGNIFLCVWLFLGIILTALIK). Residues 513–560 (SDLRRHNINIGIANGDIKAVPVEDTVEDSPTDKESKTIVMSKQSESAI) are Cytoplasmic-facing. The tract at residues 537–560 (TVEDSPTDKESKTIVMSKQSESAI) is disordered. Serine 541 bears the Phosphoserine mark. Residues 550 to 560 (IVMSKQSESAI) show a composition bias toward polar residues.

Belongs to the major facilitator superfamily. Feline leukemia virus subgroup C receptor (TC 2.A.1.28.1) family.

The protein localises to the cell membrane. It carries out the reaction choline(out) = choline(in). It catalyses the reaction ethanolamine(in) = ethanolamine(out). The enzyme catalyses heme b(in) = heme b(out). In terms of biological role, uniporter that mediates the transport of extracellular choline and ethanolamine into cells, thereby playing a key role in phospholipid biosynthesis. Choline and ethanolamine are the precursors of phosphatidylcholine and phosphatidylethanolamine, respectively, the two most abundant phospholipids. Transport is not coupled with proton transport and is exclusively driven by the choline (or ethanolamine) gradient across the plasma membrane. Also acts as a heme b transporter that mediates heme efflux from the cytoplasm to the extracellular compartment. Functionally, (Microbial infection) Confers susceptibility to Feline leukemia virus subgroup C (FeLV-C) infection, which is associated with fatal erythroid aplasia, also known as aplastic anemia. The polypeptide is Choline/ethanolamine transporter FLVCR1 (FLVCR1) (Felis catus (Cat)).